The chain runs to 1516 residues: MTSGIYYKGLQCWIPDEQSQWIPGSIKDCRVEGEKAFLTVQDENENETVITVKPDDLNYEGRNGLPFLRSINSDADDLTDLSYLNEPSVLDALSTRYNQLQIYTYSGIVLIAVNPFQRLPNLYTHEIVRAYSEKSRDELDPHLYAIAEDSYKCMNQEHKNQTIIISGESGAGKTVSARYIMRYFASVQALIQSTDSNFHEAPQLTAVENEILATNPIMEAFGNSKTSRNDNSSRFGKYIQILFDGNATIIGAKIQTYLLERSRLVFQPNQERNYHIFYQILAGSSSEQLEKWKLVENSQEFNYLKQGNCSTIEGVNDKEEFKATVDALKTVGIDNDTCECIFSLLAALLHIGNIEVKHSRNDAYIDSKNENLINATSLLGVDPSSLVKWLTKRKIKMASEGILKPLNEFQAVVARDSVAKFLYASLFDWLVATINKALMYSADKSNQTAKSFIGVLDIYGFEHFKKNSFEQFCINYANEKLQQEFYRHVFKLEQEEYAAEGLNWSYIDYQDNQQCISMIESRLGILSLLDEECRMPTNSDENWVSKLNDAFSKPEFKNSYQKSRFGNKEFTIKHYALDVVYCAEGFIDKNRDTISDELLELFTNSDVPFVKDLVLFRLEQTAPPADTKKIKTKPKSNTLGSMFKSSLVSLMSTINETNAHYIRCIKPNEEKEAWKFDNQMVVSQLRACGVLETIKISCAGFPSRWTFDEFVSRYYMLVPSAVRTTESLTFSKAILEKHADPTKYQIGKTKIFFRSGVTPLLESARDKALKHAAHLLYEAFAVNYYRTRFLLSRKRVRSFQAVAHGFLSRRHTEYELLSSNIIKLQSLWRTALKRKEFIQTKNSILKVQSIIRGFLLRQTLEEKTKHDATLIIQSLWLTFKAHKHYKELQYYAVRIQSLWRMKLAKRQLTELKIESTKASHLKQVSYRLESRLFEISKQLDNSEQENNKFRERIAELESHLSNYAEAKLAQERELEQTRVLISDQSQDGELKELLEEKENALIMMEEEMRQVNDANTELLRVNATLKSQLKNYDMIIVEQTSQLKEKNRIIASLTKATKILNSASSIEQSRNSEEKSRRDSSLMEMRTQKEMLVLLMNDGLKHDLDKLTEYAGRTFTTLKTLLLKDNDVEAQKLDHLFLAKLLFIIISQMWKSNLCQESVALVERYCVHTLEYVFQKTSSANERPDIGFWVANTHALLAFVYTKQQAFKHSSAFTLLSTESHESVQTIFEMIESHLSKIFFEWVRQVNNFLKPLIVQAMIITGTNTDAGDENRKLRIKFFEKPKYKITDVIHVLNKVHDSCQAYKVNYEIYNALIRSIYRFINVEAFNSLFIDERGSWKRGTNISYNYHVLKDWCLESGVPEAYLQLEELLQTSKILQFVKDDPNYVARVRDFYALNFLQIKTLLHRYDYADYEAHVPKKTMSELSKNIVAEGINQREQLTYEVLDYRLQDSFEESPSLEKIKIPDDCNVTYLRRIIDLASAEESVEQALITVGNVADNDVQNSSDEENQVPNGIKV.

Residues Tyr-7–Arg-62 form the Myosin N-terminal SH3-like domain. The Myosin motor domain occupies Ser-73–Asp-766. Gly-167–Thr-174 contacts ATP. The segment at Leu-647–Glu-669 is actin-binding. IQ domains follow at residues Arg-793 to Glu-813, Ser-818 to Ile-838, Thr-840 to Lys-865, His-866 to Lys-886, and Leu-888 to Lys-917. Positions Tyr-926 to Met-1034 form a coiled coil. 2 positions are modified to phosphoserine: Ser-1065 and Ser-1072. The Dilute domain occupies Glu-1163–Glu-1431.

It belongs to the TRAFAC class myosin-kinesin ATPase superfamily. Myosin family.

The protein resides in the cytoplasm. In terms of biological role, involved in cell wall deposition where it has a role in the localization of mok1. This is Myosin-52 (myo52) from Schizosaccharomyces pombe (strain 972 / ATCC 24843) (Fission yeast).